We begin with the raw amino-acid sequence, 288 residues long: Acetyl-coenzyme A carboxylase carboxyl transferase subunit beta (288 aa).

Residues 34–288 enclose the CoA carboxyltransferase N-terminal domain; that stretch reads LFAKCPACKH…HLVAFHGGGQ (255 aa). The Zn(2+) site is built by Cys-38, Cys-41, Cys-56, and Cys-59. The C4-type zinc-finger motif lies at 38–59; that stretch reads CPACKHMIYKKDLGLAKICPTC.

The protein belongs to the AccD/PCCB family. As to quaternary structure, acetyl-CoA carboxylase is a heterohexamer composed of biotin carboxyl carrier protein (AccB), biotin carboxylase (AccC) and two subunits each of ACCase subunit alpha (AccA) and ACCase subunit beta (AccD). Zn(2+) serves as cofactor.

Its subcellular location is the cytoplasm. The enzyme catalyses N(6)-carboxybiotinyl-L-lysyl-[protein] + acetyl-CoA = N(6)-biotinyl-L-lysyl-[protein] + malonyl-CoA. It participates in lipid metabolism; malonyl-CoA biosynthesis; malonyl-CoA from acetyl-CoA: step 1/1. In terms of biological role, component of the acetyl coenzyme A carboxylase (ACC) complex. Biotin carboxylase (BC) catalyzes the carboxylation of biotin on its carrier protein (BCCP) and then the CO(2) group is transferred by the transcarboxylase to acetyl-CoA to form malonyl-CoA. In Streptococcus pyogenes serotype M4 (strain MGAS10750), this protein is Acetyl-coenzyme A carboxylase carboxyl transferase subunit beta.